The following is a 202-amino-acid chain: uncharacterized protein (202 aa).

The protein resides in the mitochondrion. This is an uncharacterized protein from Schizosaccharomyces pombe (strain 972 / ATCC 24843) (Fission yeast).